Consider the following 330-residue polypeptide: Phosphate acyltransferase (330 aa).

This sequence belongs to the PlsX family. As to quaternary structure, homodimer. Probably interacts with PlsY.

The protein localises to the cytoplasm. It catalyses the reaction a fatty acyl-[ACP] + phosphate = an acyl phosphate + holo-[ACP]. Its pathway is lipid metabolism; phospholipid metabolism. Its function is as follows. Catalyzes the reversible formation of acyl-phosphate (acyl-PO(4)) from acyl-[acyl-carrier-protein] (acyl-ACP). This enzyme utilizes acyl-ACP as fatty acyl donor, but not acyl-CoA. The polypeptide is Phosphate acyltransferase (Lactobacillus delbrueckii subsp. bulgaricus (strain ATCC 11842 / DSM 20081 / BCRC 10696 / JCM 1002 / NBRC 13953 / NCIMB 11778 / NCTC 12712 / WDCM 00102 / Lb 14)).